Consider the following 225-residue polypeptide: Protein-L-isoaspartate O-methyltransferase (225 aa).

The active site involves Ser-75.

It belongs to the methyltransferase superfamily. L-isoaspartyl/D-aspartyl protein methyltransferase family.

The protein localises to the cytoplasm. It carries out the reaction [protein]-L-isoaspartate + S-adenosyl-L-methionine = [protein]-L-isoaspartate alpha-methyl ester + S-adenosyl-L-homocysteine. In terms of biological role, catalyzes the methyl esterification of L-isoaspartyl residues in peptides and proteins that result from spontaneous decomposition of normal L-aspartyl and L-asparaginyl residues. It plays a role in the repair and/or degradation of damaged proteins. This Xylella fastidiosa (strain 9a5c) protein is Protein-L-isoaspartate O-methyltransferase.